Reading from the N-terminus, the 62-residue chain is Photosystem II reaction center X protein (62 aa).

A helical transmembrane segment spans residues 26–46 (IASFFAAALLIVIPAATFLIF).

The protein belongs to the PsbX family. Type 2 subfamily. As to quaternary structure, PSII consists of a core antenna complex that captures photons, and an electron transfer chain that converts photonic excitation into a charge separation. PSII forms dimeric complexes.

It is found in the cellular thylakoid membrane. In terms of biological role, involved in the binding and/or turnover of quinones at the Q(B) site of Photosystem II. This Prochlorococcus marinus (strain MIT 9515) protein is Photosystem II reaction center X protein.